A 188-amino-acid polypeptide reads, in one-letter code: EP300-interacting inhibitor of differentiation 1 (188 aa).

The tract at residues 1–122 (MSEMAELSEL…PEEEQLSGAG (122 aa)) is disordered. Acidic residues-rich tracts occupy residues 53 to 64 (LEEEGPMEEEEA) and 94 to 117 (FESE…EEEQ). The interval 55–121 (EEGPMEEEEA…YPEEEQLSGA (67 aa)) is interaction with NR0B2. The LXCXE motif signature appears at 179–183 (LGCDE).

As to quaternary structure, interacts via its LXCXE motif with the entire pocket region of RB1. Interacts with EP300, NR0B2 and TRIM27.

The protein localises to the nucleus. The protein resides in the cytoplasm. Its function is as follows. Interacts with RB1 and EP300 and acts as a repressor of MYOD1 transactivation. Inhibits EP300 and CBP histone acetyltransferase activity. May be involved in coupling cell cycle exit to the transcriptional activation of genes required for cellular differentiation. May act as a candidate coinhibitory factor for NR0B2 that can be directly linked to transcription inhibitory mechanisms. In Pongo abelii (Sumatran orangutan), this protein is EP300-interacting inhibitor of differentiation 1.